The sequence spans 235 residues: uncharacterized protein (235 aa).

Disordered stretches follow at residues 1–36 (MGMLAPGPLQGRRPRKGHKGQEDAVAPGCKASGRGS) and 213–235 (VKTRKSKRRSGEGSHLTTSILEQ).

This is an uncharacterized protein from Homo sapiens (Human).